We begin with the raw amino-acid sequence, 76 residues long: Small ribosomal subunit protein bS18 (76 aa).

Belongs to the bacterial ribosomal protein bS18 family. Part of the 30S ribosomal subunit. Forms a tight heterodimer with protein bS6.

In terms of biological role, binds as a heterodimer with protein bS6 to the central domain of the 16S rRNA, where it helps stabilize the platform of the 30S subunit. The sequence is that of Small ribosomal subunit protein bS18 from Tolumonas auensis (strain DSM 9187 / NBRC 110442 / TA 4).